The sequence spans 278 residues: Phosphatidylglycerol--prolipoprotein diacylglyceryl transferase (278 aa).

3 helical membrane passes run 21 to 41 (WYGI…QASV), 54 to 74 (IIFW…VIFQ), and 88 to 108 (IWHG…TGII). Arg136 contacts a 1,2-diacyl-sn-glycero-3-phospho-(1'-sn-glycerol). 2 consecutive transmembrane segments (helical) span residues 176–196 (QPTF…LILL) and 234–254 (IRVA…IMII).

The protein belongs to the Lgt family.

Its subcellular location is the cell membrane. It catalyses the reaction L-cysteinyl-[prolipoprotein] + a 1,2-diacyl-sn-glycero-3-phospho-(1'-sn-glycerol) = an S-1,2-diacyl-sn-glyceryl-L-cysteinyl-[prolipoprotein] + sn-glycerol 1-phosphate + H(+). It functions in the pathway protein modification; lipoprotein biosynthesis (diacylglyceryl transfer). Catalyzes the transfer of the diacylglyceryl group from phosphatidylglycerol to the sulfhydryl group of the N-terminal cysteine of a prolipoprotein, the first step in the formation of mature lipoproteins. The sequence is that of Phosphatidylglycerol--prolipoprotein diacylglyceryl transferase from Staphylococcus xylosus.